Consider the following 480-residue polypeptide: Aromatic-L-amino-acid decarboxylase (480 aa).

Residue Met-1 is modified to N-acetylmethionine. Tandem repeats lie at residues 58–115 (KDIE…TELE) and 118–178 (MMDW…TQAA). A 2 X approximate tandem repeats region spans residues 58 to 178 (KDIEKIIMPG…AASPEFTQAA (121 aa)). Substrate is bound at residue Thr-82. The pyridoxal 5'-phosphate site is built by Ala-148 and Ser-149. His-192 provides a ligand contact to substrate. Pyridoxal 5'-phosphate is bound by residues Thr-246 and Asn-300. Lys-303 carries the post-translational modification N6-(pyridoxal phosphate)lysine.

The protein belongs to the group II decarboxylase family. As to quaternary structure, homodimer. Requires pyridoxal 5'-phosphate as cofactor.

The enzyme catalyses L-dopa + H(+) = dopamine + CO2. The catalysed reaction is 5-hydroxy-L-tryptophan + H(+) = serotonin + CO2. The protein operates within catecholamine biosynthesis; dopamine biosynthesis; dopamine from L-tyrosine: step 2/2. In terms of biological role, catalyzes the decarboxylation of L-3,4-dihydroxyphenylalanine (DOPA) to dopamine and L-5-hydroxytryptophan to serotonin. The sequence is that of Aromatic-L-amino-acid decarboxylase (Ddc) from Mus musculus (Mouse).